We begin with the raw amino-acid sequence, 357 residues long: tRNA pseudouridine synthase Pus10 (357 aa).

Residues 1–118 form the THUMP domain; the sequence is MNLCRECYGI…TFTFELQIRP (118 aa). Catalysis depends on D187, which acts as the Nucleophile. Substrate contacts are provided by Y251 and Y322.

Belongs to the pseudouridine synthase Pus10 family.

The enzyme catalyses uridine(54) in tRNA = pseudouridine(54) in tRNA. It catalyses the reaction uridine(55) in tRNA = pseudouridine(55) in tRNA. Functionally, responsible for synthesis of pseudouridine from uracil-54 and uracil-55 in the psi GC loop of transfer RNAs. This Archaeoglobus fulgidus (strain ATCC 49558 / DSM 4304 / JCM 9628 / NBRC 100126 / VC-16) protein is tRNA pseudouridine synthase Pus10.